Consider the following 101-residue polypeptide: Multivesicular body sorting factor 12 (101 aa).

Met-1 carries the N-acetylmethionine modification. Ser-94 is modified (phosphoserine).

Component of the ESCRT-I complex (endosomal sorting complex required for transport I) which consists of STP22, VPS28, SRN2 and MVB12 in a 1:1:1:1 stoichiometry. Interacts with STP22 and SRN2.

The protein resides in the cytoplasm. It is found in the endosome. It localises to the late endosome membrane. Component of the ESCRT-I complex, a regulator of vesicular trafficking process. Binds to ubiquitinated cargo proteins and is required for the sorting of endocytic ubiquitinated cargos into multivesicular bodies (MVBs). Appears to be involved in cargo sorting and release of the ESCRT-I complex from the MVBs. In Saccharomyces cerevisiae (strain ATCC 204508 / S288c) (Baker's yeast), this protein is Multivesicular body sorting factor 12 (MVB12).